A 616-amino-acid chain; its full sequence is Elongation factor 4 (616 aa).

Residues 14–195 enclose the tr-type G domain; sequence SRIRNFCIIA…EVIRQVPPPV (182 aa). GTP is bound by residues 26 to 31 and 142 to 145; these read DHGKST and NKID.

The protein belongs to the TRAFAC class translation factor GTPase superfamily. Classic translation factor GTPase family. LepA subfamily.

Its subcellular location is the cell membrane. It catalyses the reaction GTP + H2O = GDP + phosphate + H(+). Required for accurate and efficient protein synthesis under certain stress conditions. May act as a fidelity factor of the translation reaction, by catalyzing a one-codon backward translocation of tRNAs on improperly translocated ribosomes. Back-translocation proceeds from a post-translocation (POST) complex to a pre-translocation (PRE) complex, thus giving elongation factor G a second chance to translocate the tRNAs correctly. Binds to ribosomes in a GTP-dependent manner. The polypeptide is Elongation factor 4 (Nocardia farcinica (strain IFM 10152)).